The primary structure comprises 476 residues: MAPAGLSLGATILCLLAWAGLAAGDRVYIHPFHLLVHSKSNCDQLEKPSVETPADPTLTPVPIQTKSSPVDEEALWEQLVRATEKLEAEDRLRASEVGLLLNFMGFHVYKTLSETWSVASGLVFSPVALFSTLTSFYTGALDPTASRLQAFLGVPGEGQGCTSRLDGRKVLSSLQTIQGLLVAPGGASSQARLLLSTVVGLFTAPGLHLKQPFVQGLSSFAPITLPRSLDLSTDPNLAAEKINRFMHSATGWNMGRPLAAASPDSTLLFNAYVHFQGKMKGFSLLPGLTEFWVDNTTSVPVPMLSGSGTFHYWSDNQNHLSMTRVPLSANGYLLLIQPHHTLDLRKVEALIFQHNFLTRMKNLSPRAIHLTVPQLTLKASYDLQDLLAQAKLPTLLGAEANLGKISDANLRVGKVLNSVLFELKADGEQAPESVPQPAGPEALEVTLNSPFLLAVLERSSGALHFLGRVSRPLSAE.

The signal sequence occupies residues 1–24 (MAPAGLSLGATILCLLAWAGLAAG). C42 and C161 form a disulfide bridge. The tract at residues 45–64 (LEKPSVETPADPTLTPVPIQ) is disordered. N295 carries N-linked (GlcNAc...) asparagine glycosylation.

This sequence belongs to the serpin family. Post-translationally, in response to low blood pressure, the enzyme renin/REN cleaves angiotensinogen to produce angiotensin-1. Angiotensin-1 is a substrate of ACE (angiotensin converting enzyme) that removes a dipeptide to yield the physiologically active peptide angiotensin-2. Angiotensin-1 and angiotensin-2 can be further processed to generate angiotensin-3, angiotensin-4. Angiotensin 1-9 is cleaved from angiotensin-1 by ACE2 and can be further processed by ACE to produce angiotensin 1-7, angiotensin 1-5 and angiotensin 1-4. Angiotensin 1-7 has also been proposed to be cleaved from angiotensin-2 by ACE2 or from angiotensin-1 by MME (neprilysin). The disulfide bond is labile. Angiotensinogen is present in the circulation in a near 40:60 ratio with the oxidized disulfide-bonded form, which preferentially interacts with receptor-bound renin.

It is found in the secreted. Essential component of the renin-angiotensin system (RAS), a potent regulator of blood pressure, body fluid and electrolyte homeostasis. In terms of biological role, acts directly on vascular smooth muscle as a potent vasoconstrictor, affects cardiac contractility and heart rate through its action on the sympathetic nervous system, and alters renal sodium and water absorption through its ability to stimulate the zona glomerulosa cells of the adrenal cortex to synthesize and secrete aldosterone. Acts by binding to angiotensin receptors AGTR1 and AGTR2. Also binds the DEAR/FBXW7-AS1 receptor. Its function is as follows. Stimulates aldosterone release. Functionally, is a ligand for the G-protein coupled receptor MAS1. Has vasodilator and antidiuretic effects. Has an antithrombotic effect that involves MAS1-mediated release of nitric oxide from platelets. The protein is Angiotensinogen (AGT) of Ovis aries (Sheep).